We begin with the raw amino-acid sequence, 126 residues long: Major sperm protein 1 (126 aa).

N-acetylalanine is present on A2. Positions 8–125 (DIATMPAQKV…RRKNLPIEYN (118 aa)) constitute an MSP domain.

Sperm.

Its subcellular location is the cell projection. It localises to the pseudopodium. The protein resides in the cytoplasm. It is found in the cytoskeleton. In terms of biological role, central component in molecular interactions underlying sperm crawling. Forms an extensive filament system that extends from sperm villipoda, along the leading edge of the pseudopod. The protein is Major sperm protein 1 (MSP-1) of Globodera rostochiensis (Golden nematode worm).